We begin with the raw amino-acid sequence, 226 residues long: Insulin-like growth factor-binding protein 6 (226 aa).

The N-terminal stretch at methionine 1–serine 25 is a signal peptide. Residues alanine 26–alanine 99 enclose the IGFBP N-terminal domain. Cystine bridges form between cysteine 30–cysteine 33, cysteine 49–cysteine 55, cysteine 63–cysteine 76, and cysteine 70–cysteine 96. Residues glycine 92–cysteine 148 form a disordered region. The segment covering glycine 101 to lysine 126 has biased composition (basic and acidic residues). Residues methionine 145–cysteine 220 form the Thyroglobulin type-1 domain. 3 disulfides stabilise this stretch: cysteine 148–cysteine 176, cysteine 187–cysteine 198, and cysteine 200–cysteine 220. A disordered region spans residues glycine 205 to glycine 226. The segment covering glycine 214 to glycine 226 has biased composition (polar residues).

In terms of assembly, interacts (via C-terminal domain) with PHB2. O-glycosylated.

The protein resides in the secreted. In terms of biological role, IGF-binding proteins prolong the half-life of the IGFs and have been shown to either inhibit or stimulate the growth promoting effects of the IGFs on cell culture. They alter the interaction of IGFs with their cell surface receptors. Activates the MAPK signaling pathway and induces cell migration. The chain is Insulin-like growth factor-binding protein 6 (Igfbp6) from Rattus norvegicus (Rat).